Consider the following 1446-residue polypeptide: ABC transporter G family member 53 (1446 aa).

The region spanning Ala-153–Glu-426 is the ABC transporter 1 domain. ATP is bound at residue Gly-186 to Thr-193. In terms of domain architecture, ABC transmembrane type-2 1 spans Glu-504–Phe-717. Transmembrane regions (helical) follow at residues Val-523–Ile-543, Gly-555–Ala-575, Thr-610–Phe-630, Phe-641–Phe-661, Val-666–Ile-686, and Ile-752–Leu-772. The region spanning Ile-849–Glu-1101 is the ABC transporter 2 domain. Residue Gly-894–Thr-901 coordinates ATP. In terms of domain architecture, ABC transmembrane type-2 2 spans Thr-1174 to Phe-1388. Helical transmembrane passes span Ala-1195–Val-1215, Leu-1225–Gln-1242, Leu-1281–Phe-1301, Phe-1308–Met-1328, Val-1338–Ile-1358, Ile-1363–Leu-1383, and Phe-1415–Gly-1435.

Belongs to the ABC transporter superfamily. ABCG family. PDR (TC 3.A.1.205) subfamily.

Its subcellular location is the membrane. Functionally, may be a general defense protein. This Oryza sativa subsp. japonica (Rice) protein is ABC transporter G family member 53.